The chain runs to 198 residues: NAD(P)H quinone oxidoreductase PST1 (198 aa).

Residues 6–192 (VAIIIYSLYH…AIAKQQGEDF (187 aa)) enclose the Flavodoxin-like domain. Residues 12–16 (SLYHH) and 112–164 (VFVW…SPWG) contribute to the FMN site.

Belongs to the WrbA family. It depends on FMN as a cofactor.

It localises to the cell membrane. It carries out the reaction a quinone + NADH + H(+) = a quinol + NAD(+). The enzyme catalyses a quinone + NADPH + H(+) = a quinol + NADP(+). Flavodoxin-like protein (FLP) that plays a role in cell wall integrity, oxidative stress protection and virulence. FLPs act as NAD(P)H quinone oxidoreductases. Reduces ubiquinone (coenzyme Q), enabling it to serve as an antioxidant in the membrane. The polypeptide is NAD(P)H quinone oxidoreductase PST1 (Candida albicans (strain SC5314 / ATCC MYA-2876) (Yeast)).